The sequence spans 187 residues: UPF0232 protein JTY_0004 (187 aa).

Composition is skewed to basic and acidic residues over residues 1–17 and 24–45; these read MTGS…ERSM and LVRR…DAGR. 2 disordered regions span residues 1-75 and 168-187; these read MTGS…DPQP and PSWR…DTYG.

It belongs to the UPF0232 family.

The polypeptide is UPF0232 protein JTY_0004 (Mycobacterium bovis (strain BCG / Tokyo 172 / ATCC 35737 / TMC 1019)).